A 107-amino-acid polypeptide reads, in one-letter code: Translation initiation factor IF-1, chloroplastic (107 aa).

The S1-like domain maps to 8–83 (REKKNPREAK…SKGRIIYRLP (76 aa)). The disordered stretch occupies residues 81-107 (RLPHKDSKRTEDSKDTEDLKDTKDSKG). The segment covering 83–107 (PHKDSKRTEDSKDTEDLKDTKDSKG) has biased composition (basic and acidic residues).

It belongs to the IF-1 family. In terms of assembly, component of the 30S ribosomal translation pre-initiation complex which assembles on the 30S ribosome in the order IF-2 and IF-3, IF-1 and N-formylmethionyl-tRNA(fMet); mRNA recruitment can occur at any time during PIC assembly.

The protein resides in the plastid. Its subcellular location is the chloroplast. In terms of biological role, one of the essential components for the initiation of protein synthesis. Stabilizes the binding of IF-2 and IF-3 on the 30S subunit to which N-formylmethionyl-tRNA(fMet) subsequently binds. Helps modulate mRNA selection, yielding the 30S pre-initiation complex (PIC). Upon addition of the 50S ribosomal subunit IF-1, IF-2 and IF-3 are released leaving the mature 70S translation initiation complex. The protein is Translation initiation factor IF-1, chloroplastic of Oryza sativa subsp. indica (Rice).